The chain runs to 200 residues: Holliday junction branch migration complex subunit RuvA (200 aa).

The tract at residues 1–64 is domain I; sequence MIAHLTGLVG…EDAFLLYGFA (64 aa). The segment at 65-143 is domain II; sequence EAAERDWFRL…RMPAGPGVTI (79 aa). The interval 144 to 147 is flexible linker; sequence AAPP. The domain III stretch occupies residues 148–200; the sequence is ASGGVEADALLALAGLGFRRAEAQPVVGRILARLDGKADLDVVIRESLRELAR.

This sequence belongs to the RuvA family. As to quaternary structure, homotetramer. Forms an RuvA(8)-RuvB(12)-Holliday junction (HJ) complex. HJ DNA is sandwiched between 2 RuvA tetramers; dsDNA enters through RuvA and exits via RuvB. An RuvB hexamer assembles on each DNA strand where it exits the tetramer. Each RuvB hexamer is contacted by two RuvA subunits (via domain III) on 2 adjacent RuvB subunits; this complex drives branch migration. In the full resolvosome a probable DNA-RuvA(4)-RuvB(12)-RuvC(2) complex forms which resolves the HJ.

The protein localises to the cytoplasm. Its function is as follows. The RuvA-RuvB-RuvC complex processes Holliday junction (HJ) DNA during genetic recombination and DNA repair, while the RuvA-RuvB complex plays an important role in the rescue of blocked DNA replication forks via replication fork reversal (RFR). RuvA specifically binds to HJ cruciform DNA, conferring on it an open structure. The RuvB hexamer acts as an ATP-dependent pump, pulling dsDNA into and through the RuvAB complex. HJ branch migration allows RuvC to scan DNA until it finds its consensus sequence, where it cleaves and resolves the cruciform DNA. In Gluconacetobacter diazotrophicus (strain ATCC 49037 / DSM 5601 / CCUG 37298 / CIP 103539 / LMG 7603 / PAl5), this protein is Holliday junction branch migration complex subunit RuvA.